Reading from the N-terminus, the 647-residue chain is Zinc finger protein 567 (647 aa).

The region spanning 32-77 is the KRAB domain; it reads MDVMLENYCHLISVGCHMTKPDVILKLERGEEPWTSFKGHTCLEEN. Residues lysine 173, lysine 202, and lysine 217 each participate in a glycyl lysine isopeptide (Lys-Gly) (interchain with G-Cter in SUMO2) cross-link. The C2H2-type 1; degenerate zinc-finger motif lies at 210-232; that stretch reads FEYNDCEKAFLKRGGPVTHSRTY. 7 C2H2-type zinc fingers span residues 253–275, 281–303, 309–331, 337–359, 365–387, 393–415, and 421–443; these read HTCT…QGIH, YQCH…QRTH, FVCN…QRTH, YECP…QRTH, YECS…QRIH, YICK…QRTH, and YICN…EKTH. Residue lysine 447 forms a Glycyl lysine isopeptide (Lys-Gly) (interchain with G-Cter in SUMO2) linkage. 7 C2H2-type zinc fingers span residues 449–471, 477–499, 505–527, 533–555, 561–583, 589–611, and 617–639; these read YICN…QRTH, YECP…HRTH, YECN…QRIH, YICN…QKIH, YECP…QRTH, and YKCS…QRTH.

Belongs to the krueppel C2H2-type zinc-finger protein family.

Its subcellular location is the nucleus. In terms of biological role, may be involved in transcriptional regulation. The polypeptide is Zinc finger protein 567 (ZNF567) (Bos taurus (Bovine)).